Consider the following 213-residue polypeptide: ATP phosphoribosyltransferase (213 aa).

Belongs to the ATP phosphoribosyltransferase family. Short subfamily. Heteromultimer composed of HisG and HisZ subunits.

Its subcellular location is the cytoplasm. It catalyses the reaction 1-(5-phospho-beta-D-ribosyl)-ATP + diphosphate = 5-phospho-alpha-D-ribose 1-diphosphate + ATP. It functions in the pathway amino-acid biosynthesis; L-histidine biosynthesis; L-histidine from 5-phospho-alpha-D-ribose 1-diphosphate: step 1/9. Functionally, catalyzes the condensation of ATP and 5-phosphoribose 1-diphosphate to form N'-(5'-phosphoribosyl)-ATP (PR-ATP). Has a crucial role in the pathway because the rate of histidine biosynthesis seems to be controlled primarily by regulation of HisG enzymatic activity. The protein is ATP phosphoribosyltransferase of Bacillus pumilus (strain SAFR-032).